Here is a 308-residue protein sequence, read N- to C-terminus: Zinc-binding protein TroA (308 aa).

A signal peptide spans 1-22; the sequence is MIRERICACVLALGMLTGFTHA. Residues histidine 68, histidine 133, histidine 199, and aspartate 279 each coordinate Zn(2+).

It belongs to the bacterial solute-binding protein 9 family. In terms of assembly, monomer.

It localises to the periplasm. Part of the ATP-binding cassette (ABC) transport system TroABC involved in zinc import. Binds zinc with high affinity and specificity and delivers it to the membrane permease for translocation into the cytoplasm. This Treponema pallidum (strain Nichols) protein is Zinc-binding protein TroA (troA).